Here is a 1241-residue protein sequence, read N- to C-terminus: Putative ABC transporter B family member 8 (1241 aa).

The helical transmembrane segment at 24–44 threads the bilayer; it reads FADWIDIVLMVLGSVGAIGDG. The ABC transmembrane type-1 1 domain maps to 33–323; that stretch reads MVLGSVGAIG…ALTEIRYFSE (291 aa). N48 is a glycosylation site (N-linked (GlcNAc...) asparagine). The next 5 membrane-spanning stretches (helical) occupy residues 82–102, 157–177, 183–203, 263–283, and 297–317; these read LYFVYLGLAILGVAFMEGYCW, VPIFLMHISVFITGLVFSAYF, VVAIPTLVLLLIPGLIYGKYL, GLAVGSSGISFTIWAFLAWYG, and IYAAGISFVLGGISLGTALTE. The ABC transporter 1 domain maps to 360-596; sequence VEFERVTLVY…NNHYAKLVKL (237 aa). An ATP-binding site is contributed by 395–402; sequence GASGSGKS. N-linked (GlcNAc...) asparagine glycans are attached at residues N571, N632, and N648. The ABC transmembrane type-1 2 domain maps to 676-964; that stretch reads SLVGCISATT…AGSMTSDLAK (289 aa). Helical transmembrane passes span 686–706 and 716–736; these read FGAIQPVYALSIGGMISAFFA and IHIYSLIFISLTFLSITLNLL. An N-linked (GlcNAc...) asparagine glycan is attached at N773. 2 consecutive transmembrane segments (helical) span residues 797-815 and 821-838; these read ISLLVQTISGVTIAMIIGL and LALVMIAVQPLSILCFYT. N855 carries N-linked (GlcNAc...) asparagine glycosylation. Transmembrane regions (helical) follow at residues 899 to 919 and 933 to 953; these read AWLAGFGMGSAQCLTFLTWAL and ISAGDVFKTFFVLVSTGKVIA. The region spanning 998–1236 is the ABC transporter 2 domain; it reads IELKNIDFSY…GGQFSRLAHA (239 aa). 1033–1040 provides a ligand contact to ATP; the sequence is GTSGCGKS. A glycan (N-linked (GlcNAc...) asparagine) is linked at N1187.

The protein belongs to the ABC transporter superfamily. ABCB family. Multidrug resistance exporter (TC 3.A.1.201) subfamily.

It is found in the membrane. The chain is Putative ABC transporter B family member 8 (ABCB8) from Arabidopsis thaliana (Mouse-ear cress).